The sequence spans 362 residues: Quinolone epoxide rearrangement protein penF (362 aa).

His220 is an active-site residue. The active-site Broensted acid is Glu222.

This sequence belongs to the quinolone epoxide rearrangement protein penF family.

It carries out the reaction [(1'E)-5'-(3',3'-dimethyloxiran-2'-yl)-3'-hydroxy-3'-methylpent-1'-en-1'-yl]-quinolinone B = yaequinolone D. It functions in the pathway secondary metabolite biosynthesis. The protein operates within alkaloid biosynthesis. Its pathway is mycotoxin biosynthesis. Functionally, quinolone epoxide rearrangement protein; part of the gene cluster that mediates the biosynthesis of penigequinolones, potent insecticidal alkaloids that contain a highly modified 10-carbon prenyl group. The first stage is catalyzed by the nonribosomal peptide synthetase penN that condenses anthranilic acid and O-methyl-L-tyrosine to produce 4'-methoxycyclopeptin. 4'-methoxycyclopeptin is then converted to 4'-methoxydehydrocyclopeptin by the ketoglutarate-dependent dioxygenase penM through dehydrogenation to form a double bond between C-alpha and C-beta of the O-methyltyrosine side chain. PenM also converts its first product methoxydehydrocyclopeptin to 4'-methoxycyclopenin. The following conversion of 4'methoxycyclopenin into 4'-methoxyviridicatin is catalyzed by the cyclopenase penL. 4'-methoxyviridicatin is the precursor of quinolone natural products, and is further converted to quinolinone B. The prenyltransferase penI then catalyzes the canonical Friedel-Crafts alkylation of quinolinone B with dimethylallyl cation to yield dimethylallyl quinolone, which is subjected to FAD-dependent dehydrogenation by the FAD-linked oxidoreductase penH to yield conjugated aryl diene. The delta(3') double bond then serves as the site of the second alkylation with DMAPP catalyzed by the prenyltransferase penG to yield a carbenium ion intermediate, which can be attacked by H(2)O to yield a styrenyl quinolone containing a C3'-hydroxyprenyl chain, or undergo cyclization to yield yaequinolones J1 and J2. The conversion of the styrenyl quinolone into the tetrahydrofuran-containing yaequinolone C is performed by the FAD-dependent monooxygenase penE and involves epoxidation of the terminal C7'-C8' olefin, followed by epoxide ring opening initiated by the C3' hydroxyl group. The predicted cysteine hydrolase penJ acts as an epoxide hydrolase that enhances the rate of the 5-exo-tet cyclization step, increasing the yield of yaequinolone C. PenF catalyzes the cationic rearrangement of the epoxide formed by penE (before ring opening to produce yaequinolone C) into yaequinolone D. Finally, the short-chain dehydrogenase/reductase (SDR)-like reductase penD, catalyzes both the dehydration of yaequinolone D and the reduction of the resulting oxonium to yield penigequinolone. This Penicillium thymicola protein is Quinolone epoxide rearrangement protein penF.